The following is a 477-amino-acid chain: 3-isopropylmalate dehydratase large subunit (477 aa).

Positions 352, 413, and 416 each coordinate [4Fe-4S] cluster.

Belongs to the aconitase/IPM isomerase family. LeuC type 1 subfamily. In terms of assembly, heterodimer of LeuC and LeuD. [4Fe-4S] cluster is required as a cofactor.

It carries out the reaction (2R,3S)-3-isopropylmalate = (2S)-2-isopropylmalate. It functions in the pathway amino-acid biosynthesis; L-leucine biosynthesis; L-leucine from 3-methyl-2-oxobutanoate: step 2/4. In terms of biological role, catalyzes the isomerization between 2-isopropylmalate and 3-isopropylmalate, via the formation of 2-isopropylmaleate. The sequence is that of 3-isopropylmalate dehydratase large subunit from Pseudomonas entomophila (strain L48).